We begin with the raw amino-acid sequence, 515 residues long: RNA-binding region-containing protein 3 (515 aa).

Residues 1 to 26 (MAVPEPSMPLSRGGPGSASLSPPRGD) are disordered. Ser-21 is modified (phosphoserine). One can recognise an RRM 1 domain in the interval 27–102 (RTLLVRHLPA…HTLVVEFAKE (76 aa)). Disordered stretches follow at residues 107–133 (HSSCPASNAEKKKRLDDTVENDKEKKE), 215–254 (LHAPLPPTSPQPPEEPPLPDEDEDLSSKESEYESSDEEDR), and 337–369 (ETEQNNEEKNSDSPDTGLDDSNTGFGKLFPKPN). Ser-108 is modified (phosphoserine). The span at 115–133 (AEKKKRLDDTVENDKEKKE) shows a compositional bias: basic and acidic residues. The span at 218–230 (PLPPTSPQPPEEP) shows a compositional bias: pro residues. The span at 337–348 (ETEQNNEEKNSD) shows a compositional bias: basic and acidic residues. Ser-349 is subject to Phosphoserine. In terms of domain architecture, RRM 2 spans 419–502 (CRIYVKNLAR…KPMVVQFARS (84 aa)).

Component of the U11/U12 snRNPs that are part of the U12-type spliceosome. Found in a complex with m(7)G-capped U12 snRNA. Interacts with PDCD7.

The protein localises to the nucleus. Its function is as follows. Participates in pre-mRNA U12-dependent splicing, performed by the minor spliceosome which removes U12-type introns. U12-type introns comprises less than 1% of all non-coding sequences. Binds to the 3'-stem-loop of m(7)G-capped U12 snRNA. This is RNA-binding region-containing protein 3 (Rnpc3) from Rattus norvegicus (Rat).